A 548-amino-acid chain; its full sequence is 2-succinyl-5-enolpyruvyl-6-hydroxy-3-cyclohexene-1-carboxylate synthase (548 aa).

This sequence belongs to the TPP enzyme family. MenD subfamily. As to quaternary structure, homodimer. Requires Mg(2+) as cofactor. It depends on Mn(2+) as a cofactor. The cofactor is thiamine diphosphate.

It carries out the reaction isochorismate + 2-oxoglutarate + H(+) = 5-enolpyruvoyl-6-hydroxy-2-succinyl-cyclohex-3-ene-1-carboxylate + CO2. It functions in the pathway quinol/quinone metabolism; 1,4-dihydroxy-2-naphthoate biosynthesis; 1,4-dihydroxy-2-naphthoate from chorismate: step 2/7. Its pathway is quinol/quinone metabolism; menaquinone biosynthesis. Its function is as follows. Catalyzes the thiamine diphosphate-dependent decarboxylation of 2-oxoglutarate and the subsequent addition of the resulting succinic semialdehyde-thiamine pyrophosphate anion to isochorismate to yield 2-succinyl-5-enolpyruvyl-6-hydroxy-3-cyclohexene-1-carboxylate (SEPHCHC). In Mycolicibacterium vanbaalenii (strain DSM 7251 / JCM 13017 / BCRC 16820 / KCTC 9966 / NRRL B-24157 / PYR-1) (Mycobacterium vanbaalenii), this protein is 2-succinyl-5-enolpyruvyl-6-hydroxy-3-cyclohexene-1-carboxylate synthase.